The chain runs to 216 residues: Endo-1,4-beta-xylanase 2 (216 aa).

A signal peptide spans Met1–Arg27. The GH11 domain occupies Ala28–Ser216. N-linked (GlcNAc...) asparagine glycosylation occurs at Asn87. The Nucleophile role is filled by Glu112. Glu203 serves as the catalytic Proton donor.

This sequence belongs to the glycosyl hydrolase 11 (cellulase G) family.

The protein localises to the secreted. It carries out the reaction Endohydrolysis of (1-&gt;4)-beta-D-xylosidic linkages in xylans.. It functions in the pathway glycan degradation; xylan degradation. Its function is as follows. Endo-1,4-beta-xylanase involved in the hydrolysis of xylan, a major structural heterogeneous polysaccharide found in plant biomass representing the second most abundant polysaccharide in the biosphere, after cellulose. The chain is Endo-1,4-beta-xylanase 2 (xyn2) from Rhizopus oryzae (Mucormycosis agent).